The primary structure comprises 483 residues: MORN repeat-containing protein 1 (483 aa).

Ser18 bears the Phosphoserine mark. 7 MORN repeats span residues 39 to 61 (YEGE…DGSY), 62 to 84 (YEGE…WSGN), 86 to 108 (YSGQ…AGGH), 109 to 131 (YEGE…DGQV), 132 to 154 (YQGS…NGDK), 155 to 177 (YEGD…DGST), and 178 to 200 (YKGQ…SGVT). The segment at 392 to 427 (EKAGNRPKGDRSPPEVLSTAQEPLRGTNRSDGTTAE) is disordered. Residues 394–404 (AGNRPKGDRSP) are compositionally biased toward basic and acidic residues. A Phosphoserine modification is found at Ser403. Over residues 418 to 427 (TNRSDGTTAE) the composition is skewed to polar residues.

This is MORN repeat-containing protein 1 (Morn1) from Rattus norvegicus (Rat).